A 151-amino-acid chain; its full sequence is Histone H2A.2.1 (151 aa).

An N-acetylmethionine modification is found at Met1. Disordered regions lie at residues 1–22 (MDGS…KKSV) and 129–151 (EKAE…PKKA). 2 short sequence motifs (SPKK motif) span residues 140–143 (SPKK) and 147–150 (SPKK). Basic residues predominate over residues 140–151 (SPKKTTKSPKKA).

Belongs to the histone H2A family. In terms of assembly, the nucleosome is a histone octamer containing two molecules each of H2A, H2B, H3 and H4 assembled in one H3-H4 heterotetramer and two H2A-H2B heterodimers. The octamer wraps approximately 147 bp of DNA. In terms of processing, phosphorylated within its C-terminal part, probably at the SPKK motifs.

It is found in the nucleus. It localises to the chromosome. In terms of biological role, core component of nucleosome. Nucleosomes wrap and compact DNA into chromatin, limiting DNA accessibility to the cellular machineries which require DNA as a template. Histones thereby play a central role in transcription regulation, DNA repair, DNA replication and chromosomal stability. DNA accessibility is regulated via a complex set of post-translational modifications of histones, also called histone code, and nucleosome remodeling. In Triticum aestivum (Wheat), this protein is Histone H2A.2.1.